Here is a 77-residue protein sequence, read N- to C-terminus: U8-lycotoxin-Ls1m (77 aa).

The first 20 residues, 1–20 (MKLMIFTGLFLFAIVSLIEA), serve as a signal peptide directing secretion. Positions 21–26 (QAENEK) are excised as a propeptide.

Belongs to the neurotoxin 19 (CSTX) family. 08 (U8-Lctx) subfamily. Contains 4 disulfide bonds. Expressed by the venom gland.

The protein localises to the secreted. The sequence is that of U8-lycotoxin-Ls1m from Lycosa singoriensis (Wolf spider).